The primary structure comprises 405 residues: Tryptophan synthase beta chain (405 aa).

Lys-98 is modified (N6-(pyridoxal phosphate)lysine).

This sequence belongs to the TrpB family. In terms of assembly, tetramer of two alpha and two beta chains. Requires pyridoxal 5'-phosphate as cofactor.

The catalysed reaction is (1S,2R)-1-C-(indol-3-yl)glycerol 3-phosphate + L-serine = D-glyceraldehyde 3-phosphate + L-tryptophan + H2O. It functions in the pathway amino-acid biosynthesis; L-tryptophan biosynthesis; L-tryptophan from chorismate: step 5/5. Functionally, the beta subunit is responsible for the synthesis of L-tryptophan from indole and L-serine. This is Tryptophan synthase beta chain from Parvibaculum lavamentivorans (strain DS-1 / DSM 13023 / NCIMB 13966).